A 369-amino-acid polypeptide reads, in one-letter code: Mitogen-activated protein kinase 11 (369 aa).

The Protein kinase domain maps to 40 to 326 (VPPLRPIGRG…VDEALCHPYL (287 aa)). ATP is bound by residues 46-54 (IGRGASGIV) and Lys69. Catalysis depends on Asp166, which acts as the Proton acceptor. A Phosphothreonine modification is found at Thr198. The short motif at 198–200 (TEY) is the TXY element. Residue Tyr200 is modified to Phosphotyrosine. Phosphothreonine is present on Thr203.

It belongs to the protein kinase superfamily. CMGC Ser/Thr protein kinase family. MAP kinase subfamily. Interacts with MKK1, MKK2 and MKK6. In terms of processing, dually phosphorylated on Thr-198 and Tyr-200, which activates the enzyme.

The catalysed reaction is L-seryl-[protein] + ATP = O-phospho-L-seryl-[protein] + ADP + H(+). It carries out the reaction L-threonyl-[protein] + ATP = O-phospho-L-threonyl-[protein] + ADP + H(+). Activated by threonine and tyrosine phosphorylation. The protein is Mitogen-activated protein kinase 11 (MPK11) of Arabidopsis thaliana (Mouse-ear cress).